Here is a 312-residue protein sequence, read N- to C-terminus: Small kinetochore-associated protein (312 aa).

Basic and acidic residues predominate over residues 1-13 (MATHKAEAQETDF). Disordered regions lie at residues 1–32 (MATH…PSSR), 55–176 (LKRS…KDKN), and 221–242 (KGLN…DPTD). Residues 75–84 (RPTTMASSKT) are compositionally biased toward polar residues. 2 stretches are compositionally biased toward basic and acidic residues: residues 131–143 (DVTK…RENG) and 166–176 (QKPEEDLKDKN). Residues 156-312 (IRSSYKPLSK…LEEMEQLLEM (157 aa)) are interaction with SPAG5. Residues 169-210 (EEDLKDKNELLEAVNKQLHQKLTETQGELKDLTQKVELLEKF) adopt a coiled-coil conformation. Positions 246–288 (LLETLKDELKLFNETAKKQMEELQALKVKLKLKEKERIQFLEQ) form a coiled coil.

In terms of assembly, part of an astrin (SPAG5)-kinastrin (SKAP) complex containing KNSTRN, SPAG5, PLK1, DYNLL1 and SGO2. Interacts with SPAG5. Directly binds to microtubules, although at relatively low affinity. Interacts with CENPE; this interaction greatly favors microtubule-binding. Interacts with DSN1/MIS13; leading to localization to kinetochores. Interacts with MAPRE1/EB1; leading to localization to the microtubule plus ends. Interacts with PRPF19. Interacts with DYNLL1. Interacts with MAP4.

It localises to the nucleus. The protein localises to the chromosome. The protein resides in the centromere. It is found in the kinetochore. Its subcellular location is the cytoplasm. It localises to the cytoskeleton. The protein localises to the spindle pole. The protein resides in the microtubule organizing center. Essential component of the mitotic spindle required for faithful chromosome segregation and progression into anaphase. Promotes the metaphase-to-anaphase transition and is required for chromosome alignment, normal timing of sister chromatid segregation, and maintenance of spindle pole architecture. The astrin (SPAG5)-kinastrin (SKAP) complex promotes stable microtubule-kinetochore attachments. Required for kinetochore oscillations and dynamics of microtubule plus-ends during live cell mitosis, possibly by forming a link between spindle microtubule plus-ends and mitotic chromosomes to achieve faithful cell division. The polypeptide is Small kinetochore-associated protein (Knstrn) (Rattus norvegicus (Rat)).